Consider the following 276-residue polypeptide: Ribosomal RNA small subunit methyltransferase A (276 aa).

S-adenosyl-L-methionine-binding residues include asparagine 27, leucine 29, glycine 54, glutamate 75, aspartate 101, and asparagine 122.

The protein belongs to the class I-like SAM-binding methyltransferase superfamily. rRNA adenine N(6)-methyltransferase family. RsmA subfamily.

The protein resides in the cytoplasm. It catalyses the reaction adenosine(1518)/adenosine(1519) in 16S rRNA + 4 S-adenosyl-L-methionine = N(6)-dimethyladenosine(1518)/N(6)-dimethyladenosine(1519) in 16S rRNA + 4 S-adenosyl-L-homocysteine + 4 H(+). Functionally, specifically dimethylates two adjacent adenosines (A1518 and A1519) in the loop of a conserved hairpin near the 3'-end of 16S rRNA in the 30S particle. May play a critical role in biogenesis of 30S subunits. The polypeptide is Ribosomal RNA small subunit methyltransferase A (Brucella melitensis biotype 1 (strain ATCC 23456 / CCUG 17765 / NCTC 10094 / 16M)).